We begin with the raw amino-acid sequence, 496 residues long: MEFVVKSAKASTQKTATLILPLGENCQLGSVAQSVDSASAGALSTALKRGDIQGKPGQTLLLHGLPGLKAERVLLVGTGKADELDSRQWRKVVNAALAVIKNLGGGDAAFAMQDVQVKGRDSYARTRLLVEIVADGQYVFDQFKSKKAEPRALQKIILLCDKAEQAGVERAAREASAIATGMAFTRDLGNLPPNVCHPTFLADQARQLSKAYKGVKLDVLDEKKLRELGAGAFLAVSQGSDQPGCIIVLQYNGGKKGDKPYALVGKGITFDTGGISLKPGLGMDEMKYDMGGGASVLGTLKAVLELQLPINLVCLLACAENMPSGGATRPGDIVTTMSGQTVEILNTDAEGRLVLCDTLTYAERFEPRAVVDVATLTGACIVALGSNTSGLLGNNDELIQQLLQAGESAADRAWQLPLFDEYQEQLDSPFADIANIGGPKAGTITAACFLSRFTKKYPWAHLDIAGTAWTSGGKEKGATGRPVPLLTQYLLDRING.

Mn(2+)-binding residues include lysine 266 and aspartate 271. The active site involves lysine 278. 3 residues coordinate Mn(2+): aspartate 289, aspartate 348, and glutamate 350. Arginine 352 is a catalytic residue.

The protein belongs to the peptidase M17 family. The cofactor is Mn(2+).

It localises to the cytoplasm. The enzyme catalyses Release of an N-terminal amino acid, Xaa-|-Yaa-, in which Xaa is preferably Leu, but may be other amino acids including Pro although not Arg or Lys, and Yaa may be Pro. Amino acid amides and methyl esters are also readily hydrolyzed, but rates on arylamides are exceedingly low.. The catalysed reaction is Release of an N-terminal amino acid, preferentially leucine, but not glutamic or aspartic acids.. Presumably involved in the processing and regular turnover of intracellular proteins. Catalyzes the removal of unsubstituted N-terminal amino acids from various peptides. The protein is Probable cytosol aminopeptidase of Stutzerimonas stutzeri (strain A1501) (Pseudomonas stutzeri).